A 63-amino-acid polypeptide reads, in one-letter code: Sarcotoxin-1A (63 aa).

The N-terminal stretch at 1 to 23 (MNFQNIFIFVALILAVFAGQSQA) is a signal peptide. Residue R62 is modified to Arginine amide.

Belongs to the cecropin family.

It localises to the secreted. Functionally, sarcotoxins, which are potent bactericidal proteins, are produced in response to injury. They are cytotoxic to both Gram-positive and Gram-negative bacteria. The sequence is that of Sarcotoxin-1A from Sarcophaga peregrina (Flesh fly).